The primary structure comprises 224 residues: Orotidine 5'-phosphate decarboxylase (224 aa).

Substrate is bound by residues Asp-10, Lys-32, Asp-59–Thr-68, Thr-115, Arg-175, Gln-184, Gly-204, and Arg-205. Lys-61 (proton donor) is an active-site residue.

It belongs to the OMP decarboxylase family. Type 1 subfamily. As to quaternary structure, homodimer.

It catalyses the reaction orotidine 5'-phosphate + H(+) = UMP + CO2. It functions in the pathway pyrimidine metabolism; UMP biosynthesis via de novo pathway; UMP from orotate: step 2/2. Its function is as follows. Catalyzes the decarboxylation of orotidine 5'-monophosphate (OMP) to uridine 5'-monophosphate (UMP). In Sphingopyxis alaskensis (strain DSM 13593 / LMG 18877 / RB2256) (Sphingomonas alaskensis), this protein is Orotidine 5'-phosphate decarboxylase.